We begin with the raw amino-acid sequence, 436 residues long: Cytochrome P450 monooxygenase phqO (436 aa).

Cysteine 377 contributes to the heme binding site.

This sequence belongs to the cytochrome P450 family. Requires heme as cofactor.

It functions in the pathway alkaloid biosynthesis. Cytochrome P450 monooxygenase; part of the gene cluster that mediates the biosynthesis of paraherquamide, a fungal indole alkaloid that belongs to a family of natural products containing a characteristic bicyclo[2.2.2]diazaoctane core. The first steps in the biosynthesis of paraherquamide is the production of the beta-methyl-proline precursor from L-isoleucine. They require oxidation of a terminally hydroxylated L-isoleucine to the corresponding aldehyde by enzymes which have still to be identified. Spontaneous cyclization and dehydration would yield the 4-methyl pyrolline-5-carboxylic acid, which is then reduced by the pyrroline-5-carboxylate reductase phqD leading to the beta-methyl-proline precursor. The next step of paraherquamide biosynthesis involves coupling of beta-methyl-proline and L-tryptophan by the bimodular NRPS phqB, to produce a monooxopiperazine intermediate. The reductase (R) domain of phqB utilizes NADPH for hydride transfer to reduce the thioester bond of the T domain-tethered linear dipeptide to a hemithioaminal intermediate, which spontaneously cleaves the C-S bond to release the aldehyde product. This compound undergoes spontaneous cyclization and dehydration to give a dienamine which is reverse prenylated at C-2 by the reverse prenyltransferase phqJ. The other prenyltransferase present in the cluster, phqI may be a redundant gene in the pathway. During biosynthetic assembly, the key step to produce the polycyclic core is catalyzed by the bifunctional reductase and intramolecular [4+2] Diels-Alderase, phqE, resulting in formation of the [2.2.2] diazaoctane intermediate preparaherquamide. Following formation of preparaherquamide, an indole 2,3-epoxidation-initiated pinacol-like rearrangement is catalyzed by the phqK FAD-dependent monooxygenase. The prenyltransferase phqA, the cytochrome P450 monooxygenase phqL, and the FAD-linked oxidoreductase phqH (or the cytochrome P450 monooxygenase phqM), are proposed to be involved in the formation of the pyran ring. The FAD-dependent monooxygenase phqK is likely responsible for generation of the spiro-oxindole, and the N-methylation is likely mediated by the phqN methyltransferase leading to the isolable natural product paraherquamide F. However, the order of these biosynthetic steps has still to be determined. In late-stage paraherquamide biosynthesis, the third P450 monooxygenase, phqO, is probably responsible for the C-14 hydroxylation, transforming paraherquamide F to paraherquamide G, and paraherquamide E to the final product paraherquamide A. The expansion from the 6-membered ring pyran (in paraherquamides F and G) to the 7-membered dioxepin ring (in paraherquamides A and E) represents a poorly understood but intriguing process that probably involves the 2-oxoglutarate-dependent dioxygenase phqC. Finally, the remaining members of the paraherquamide cluster, including phqI as well as phqM (or phqH), do not have a clearly prescribed role and appear to be redundant. This is Cytochrome P450 monooxygenase phqO from Penicillium fellutanum.